Here is a 441-residue protein sequence, read N- to C-terminus: tRNA modification GTPase MnmE (441 aa).

Residues R23, E81, and R121 each coordinate (6S)-5-formyl-5,6,7,8-tetrahydrofolate. Residues 219–366 (GFTVVLAGAP…LLDAIQAAAE (148 aa)) enclose the TrmE-type G domain. Residues 229-234 (NSGKST), 248-254 (SDSPGTT), and 273-276 (DTAG) contribute to the GTP site. Mg(2+) contacts are provided by S233 and T254. K441 contacts (6S)-5-formyl-5,6,7,8-tetrahydrofolate.

It belongs to the TRAFAC class TrmE-Era-EngA-EngB-Septin-like GTPase superfamily. TrmE GTPase family. As to quaternary structure, homodimer. Heterotetramer of two MnmE and two MnmG subunits. K(+) serves as cofactor.

The protein localises to the cytoplasm. Functionally, exhibits a very high intrinsic GTPase hydrolysis rate. Involved in the addition of a carboxymethylaminomethyl (cmnm) group at the wobble position (U34) of certain tRNAs, forming tRNA-cmnm(5)s(2)U34. This Methylobacterium radiotolerans (strain ATCC 27329 / DSM 1819 / JCM 2831 / NBRC 15690 / NCIMB 10815 / 0-1) protein is tRNA modification GTPase MnmE.